The sequence spans 148 residues: Arginine repressor (148 aa).

Belongs to the ArgR family.

The protein localises to the cytoplasm. It participates in amino-acid biosynthesis; L-arginine biosynthesis [regulation]. Its function is as follows. Regulates arginine biosynthesis genes. The protein is Arginine repressor of Prosthecochloris aestuarii (strain DSM 271 / SK 413).